Here is a 485-residue protein sequence, read N- to C-terminus: Putative ATP-dependent RNA helicase ste13 (485 aa).

A disordered region spans residues 16–38; the sequence is DRESFKGQMKAQPVDMRPKTEDV. The Q motif signature appears at 44–72; that stretch reads TEFEDYYLKRELLMGIFEAGFERPSPIQE. Residues 75–245 enclose the Helicase ATP-binding domain; the sequence is IPIALSGRDI…DKHLNKPYEI (171 aa). ATP is bound at residue 88 to 95; that stretch reads AKNGTGKT. Positions 193–196 match the DEAD box motif; that stretch reads DEAD. In terms of domain architecture, Helicase C-terminal spans 255–415; it reads GVTQYYAFVD…PIPPSIDPSL (161 aa). Residues 437-485 form a disordered region; sequence LAAQQAKGQEGYHNRPNNNRGGHPRGGGNRGGYRQSNRQPRYRGQQKAD.

Belongs to the DEAD box helicase family. DDX6/DHH1 subfamily.

Its subcellular location is the cytoplasm. The protein resides in the P-body. It carries out the reaction ATP + H2O = ADP + phosphate + H(+). Its function is as follows. ATP-dependent RNA helicase involved in mRNA turnover, and more specifically in mRNA decapping. Is involved in G1/S DNA-damage checkpoint recovery, probably through the regulation of the translational status of a subset of mRNAs. May also have a role in translation and mRNA nuclear export. The polypeptide is Putative ATP-dependent RNA helicase ste13 (ste13) (Schizosaccharomyces pombe (strain 972 / ATCC 24843) (Fission yeast)).